The following is a 284-amino-acid chain: Bifunctional protein FolD (284 aa).

Residues G165 to S167, S190, and V231 each bind NADP(+).

It belongs to the tetrahydrofolate dehydrogenase/cyclohydrolase family. Homodimer.

The catalysed reaction is (6R)-5,10-methylene-5,6,7,8-tetrahydrofolate + NADP(+) = (6R)-5,10-methenyltetrahydrofolate + NADPH. The enzyme catalyses (6R)-5,10-methenyltetrahydrofolate + H2O = (6R)-10-formyltetrahydrofolate + H(+). The protein operates within one-carbon metabolism; tetrahydrofolate interconversion. Functionally, catalyzes the oxidation of 5,10-methylenetetrahydrofolate to 5,10-methenyltetrahydrofolate and then the hydrolysis of 5,10-methenyltetrahydrofolate to 10-formyltetrahydrofolate. In Geobacillus kaustophilus (strain HTA426), this protein is Bifunctional protein FolD.